Here is a 257-residue protein sequence, read N- to C-terminus: NAD-capped RNA hydrolase NudC (257 aa).

Position 69 (Arg69) interacts with substrate. Zn(2+) is bound by residues Cys98 and Cys101. Glu111 provides a ligand contact to substrate. Cys116 and Cys119 together coordinate Zn(2+). Tyr124 contributes to the substrate binding site. In terms of domain architecture, Nudix hydrolase spans Pro125–Thr248. Residues Ala158, Glu174, and Glu178 each coordinate a divalent metal cation. The Nudix box signature appears at Gly159–Gly180. A substrate-binding site is contributed by Gln192 to Ser199. A divalent metal cation is bound at residue Glu219. Ala241 serves as a coordination point for substrate.

It belongs to the Nudix hydrolase family. NudC subfamily. Homodimer. Mg(2+) is required as a cofactor. The cofactor is Mn(2+). Requires Zn(2+) as cofactor.

It carries out the reaction a 5'-end NAD(+)-phospho-ribonucleoside in mRNA + H2O = a 5'-end phospho-adenosine-phospho-ribonucleoside in mRNA + beta-nicotinamide D-ribonucleotide + 2 H(+). The catalysed reaction is NAD(+) + H2O = beta-nicotinamide D-ribonucleotide + AMP + 2 H(+). It catalyses the reaction NADH + H2O = reduced beta-nicotinamide D-ribonucleotide + AMP + 2 H(+). MRNA decapping enzyme that specifically removes the nicotinamide adenine dinucleotide (NAD) cap from a subset of mRNAs by hydrolyzing the diphosphate linkage to produce nicotinamide mononucleotide (NMN) and 5' monophosphate mRNA. The NAD-cap is present at the 5'-end of some mRNAs and stabilizes RNA against 5'-processing. Has preference for mRNAs with a 5'-end purine. Catalyzes the hydrolysis of a broad range of dinucleotide pyrophosphates. The chain is NAD-capped RNA hydrolase NudC from Salmonella typhimurium (strain LT2 / SGSC1412 / ATCC 700720).